The sequence spans 336 residues: Fructose-1,6-bisphosphatase class 1 (336 aa).

Mg(2+) is bound by residues glutamate 92, aspartate 115, leucine 117, and aspartate 118. Substrate is bound by residues 118-121, asparagine 211, tyrosine 244, 262-264, and lysine 274; these read DGSS and YLY. Glutamate 280 lines the Mg(2+) pocket.

It belongs to the FBPase class 1 family. Homotetramer. Mg(2+) serves as cofactor.

Its subcellular location is the cytoplasm. The catalysed reaction is beta-D-fructose 1,6-bisphosphate + H2O = beta-D-fructose 6-phosphate + phosphate. Its pathway is carbohydrate biosynthesis; gluconeogenesis. This Aliivibrio fischeri (strain MJ11) (Vibrio fischeri) protein is Fructose-1,6-bisphosphatase class 1.